Consider the following 429-residue polypeptide: Adenylosuccinate synthetase (429 aa).

Residues 12-18 (GDEGKGK) and 40-42 (GHT) each bind GTP. Residue aspartate 13 is the Proton acceptor of the active site. Mg(2+) contacts are provided by aspartate 13 and glycine 40. Residues 13-16 (DEGK), 38-41 (NAGH), threonine 128, arginine 142, glutamine 223, threonine 238, and arginine 302 contribute to the IMP site. Histidine 41 serves as the catalytic Proton donor. Residue 298–304 (TTTGRPR) coordinates substrate. GTP is bound by residues arginine 304, 330–332 (CID), and 412–414 (SVG).

It belongs to the adenylosuccinate synthetase family. As to quaternary structure, homodimer. Mg(2+) is required as a cofactor.

Its subcellular location is the cytoplasm. The catalysed reaction is IMP + L-aspartate + GTP = N(6)-(1,2-dicarboxyethyl)-AMP + GDP + phosphate + 2 H(+). It functions in the pathway purine metabolism; AMP biosynthesis via de novo pathway; AMP from IMP: step 1/2. Its function is as follows. Plays an important role in the de novo pathway of purine nucleotide biosynthesis. Catalyzes the first committed step in the biosynthesis of AMP from IMP. The polypeptide is Adenylosuccinate synthetase (Streptococcus mutans serotype c (strain ATCC 700610 / UA159)).